A 316-amino-acid chain; its full sequence is Transaldolase (316 aa).

Lys127 (schiff-base intermediate with substrate) is an active-site residue.

This sequence belongs to the transaldolase family. Type 2 subfamily.

Its subcellular location is the cytoplasm. It catalyses the reaction D-sedoheptulose 7-phosphate + D-glyceraldehyde 3-phosphate = D-erythrose 4-phosphate + beta-D-fructose 6-phosphate. It functions in the pathway carbohydrate degradation; pentose phosphate pathway; D-glyceraldehyde 3-phosphate and beta-D-fructose 6-phosphate from D-ribose 5-phosphate and D-xylulose 5-phosphate (non-oxidative stage): step 2/3. Functionally, transaldolase is important for the balance of metabolites in the pentose-phosphate pathway. The sequence is that of Transaldolase from Helicobacter pylori (strain P12).